The primary structure comprises 319 residues: Acetyl-coenzyme A carboxylase carboxyl transferase subunit alpha (319 aa).

Residues 38–293 (HALQDKLRMR…KAVLLNELDA (256 aa)) form the CoA carboxyltransferase C-terminal domain.

It belongs to the AccA family. As to quaternary structure, acetyl-CoA carboxylase is a heterohexamer composed of biotin carboxyl carrier protein (AccB), biotin carboxylase (AccC) and two subunits each of ACCase subunit alpha (AccA) and ACCase subunit beta (AccD).

Its subcellular location is the cytoplasm. It carries out the reaction N(6)-carboxybiotinyl-L-lysyl-[protein] + acetyl-CoA = N(6)-biotinyl-L-lysyl-[protein] + malonyl-CoA. Its pathway is lipid metabolism; malonyl-CoA biosynthesis; malonyl-CoA from acetyl-CoA: step 1/1. Its function is as follows. Component of the acetyl coenzyme A carboxylase (ACC) complex. First, biotin carboxylase catalyzes the carboxylation of biotin on its carrier protein (BCCP) and then the CO(2) group is transferred by the carboxyltransferase to acetyl-CoA to form malonyl-CoA. This chain is Acetyl-coenzyme A carboxylase carboxyl transferase subunit alpha, found in Stenotrophomonas maltophilia (strain K279a).